Reading from the N-terminus, the 600-residue chain is Elongation factor 4 (600 aa).

A tr-type G domain is found at 6–188 (KLIRNFSIIA…AVVERIPAPK (183 aa)). GTP is bound by residues 18 to 23 (DHGKST) and 135 to 138 (NKID).

Belongs to the TRAFAC class translation factor GTPase superfamily. Classic translation factor GTPase family. LepA subfamily.

The protein localises to the cell inner membrane. It catalyses the reaction GTP + H2O = GDP + phosphate + H(+). Functionally, required for accurate and efficient protein synthesis under certain stress conditions. May act as a fidelity factor of the translation reaction, by catalyzing a one-codon backward translocation of tRNAs on improperly translocated ribosomes. Back-translocation proceeds from a post-translocation (POST) complex to a pre-translocation (PRE) complex, thus giving elongation factor G a second chance to translocate the tRNAs correctly. Binds to ribosomes in a GTP-dependent manner. The polypeptide is Elongation factor 4 (Sorangium cellulosum (strain So ce56) (Polyangium cellulosum (strain So ce56))).